The following is a 387-amino-acid chain: Protein adenylyltransferase VopS (387 aa).

ATP is bound by residues 76–77, 122–124, 353–355, and arginine 359; these read IT, LDS, and GNG. Residues 278-387 enclose the Fido domain; the sequence is LNMDNLKELH…NAENSLHGIK (110 aa).

Its subcellular location is the secreted. The enzyme catalyses L-tyrosyl-[protein] + ATP = O-(5'-adenylyl)-L-tyrosyl-[protein] + diphosphate. The catalysed reaction is L-threonyl-[protein] + ATP = 3-O-(5'-adenylyl)-L-threonyl-[protein] + diphosphate. Its function is as follows. Adenylyltransferase involved in virulence by mediating the addition of adenosine 5'-monophosphate (AMP) to specific threonine residue of host Rho GTPases RhoA, Rac and Cdc42. The resulting AMPylation prevents the interaction of Rho GTPases with downstream effectors, thereby inhibiting actin assembly in infected cells. The chain is Protein adenylyltransferase VopS (vopS) from Vibrio parahaemolyticus serotype O3:K6 (strain RIMD 2210633).